Reading from the N-terminus, the 114-residue chain is T cell receptor beta variable 6-5 (114 aa).

An N-terminal signal peptide occupies residues 1-21 (MSIGLLCCAALSLLWAGPVNA). The Ig-like domain maps to 22–114 (GVTQTPKFQV…TSVYFCASSY (93 aa)). Residues Cys42 and Cys110 are joined by a disulfide bond. Asn84 carries N-linked (GlcNAc...) asparagine glycosylation.

In terms of assembly, alpha-beta TR is a heterodimer composed of an alpha and beta chain; disulfide-linked. The alpha-beta TR is associated with the transmembrane signaling CD3 coreceptor proteins to form the TR-CD3 (TcR or TCR). The assembly of alpha-beta TR heterodimers with CD3 occurs in the endoplasmic reticulum where a single alpha-beta TR heterodimer associates with one CD3D-CD3E heterodimer, one CD3G-CD3E heterodimer and one CD247 homodimer forming a stable octameric structure. CD3D-CD3E and CD3G-CD3E heterodimers preferentially associate with TR alpha and TR beta chains, respectively. The association of the CD247 homodimer is the last step of TcR assembly in the endoplasmic reticulum and is required for transport to the cell surface.

The protein resides in the cell membrane. Functionally, v region of the variable domain of T cell receptor (TR) beta chain that participates in the antigen recognition. Alpha-beta T cell receptors are antigen specific receptors which are essential to the immune response and are present on the cell surface of T lymphocytes. Recognize peptide-major histocompatibility (MH) (pMH) complexes that are displayed by antigen presenting cells (APC), a prerequisite for efficient T cell adaptive immunity against pathogens. Binding of alpha-beta TR to pMH complex initiates TR-CD3 clustering on the cell surface and intracellular activation of LCK that phosphorylates the ITAM motifs of CD3G, CD3D, CD3E and CD247 enabling the recruitment of ZAP70. In turn ZAP70 phosphorylates LAT, which recruits numerous signaling molecules to form the LAT signalosome. The LAT signalosome propagates signal branching to three major signaling pathways, the calcium, the mitogen-activated protein kinase (MAPK) kinase and the nuclear factor NF-kappa-B (NF-kB) pathways, leading to the mobilization of transcription factors that are critical for gene expression and essential for T cell growth and differentiation. The T cell repertoire is generated in the thymus, by V-(D)-J rearrangement. This repertoire is then shaped by intrathymic selection events to generate a peripheral T cell pool of self-MH restricted, non-autoaggressive T cells. Post-thymic interaction of alpha-beta TR with the pMH complexes shapes TR structural and functional avidity. This chain is T cell receptor beta variable 6-5, found in Homo sapiens (Human).